A 159-amino-acid chain; its full sequence is Acetolactate synthase small subunit (159 aa).

The ACT domain occupies 5–79 (ILSILLENES…DVLKVTEIED (75 aa)).

It belongs to the acetolactate synthase small subunit family. As to quaternary structure, dimer of large and small chains.

The catalysed reaction is 2 pyruvate + H(+) = (2S)-2-acetolactate + CO2. Its pathway is amino-acid biosynthesis; L-isoleucine biosynthesis; L-isoleucine from 2-oxobutanoate: step 1/4. The protein operates within amino-acid biosynthesis; L-valine biosynthesis; L-valine from pyruvate: step 1/4. This chain is Acetolactate synthase small subunit (ilvH), found in Buchnera aphidicola subsp. Baizongia pistaciae (strain Bp).